Here is a 554-residue protein sequence, read N- to C-terminus: Pigment biosynthesis transcriptional activator pigB (554 aa).

Residues 1-21 (MFTSSSPEQRKPRQSRQLPGA) are disordered. The segment at residues 23 to 40 (CEECRRKKLRCDRQQPQC) is a DNA-binding region (zn(2)-C6 fungal-type).

The protein localises to the nucleus. Its function is as follows. Transcription factor; part of the gene cluster that mediates the biosynthesis of azaphilone pigments (MonAzPs), a complex mixture of compounds with a common azaphilone skeleton very widely used as food colorants. Positively regulates the expression of the azaphilone pigments (MonAzPs) gene cluster. This chain is Pigment biosynthesis transcriptional activator pigB, found in Monascus ruber (Mold).